A 272-amino-acid chain; its full sequence is Glutamate racemase (272 aa).

Substrate contacts are provided by residues 16 to 17 (DS) and 48 to 49 (YG). Cysteine 79 (proton donor/acceptor) is an active-site residue. Residue 80-81 (NT) coordinates substrate. Cysteine 191 serves as the catalytic Proton donor/acceptor. A substrate-binding site is contributed by 192 to 193 (TH).

This sequence belongs to the aspartate/glutamate racemases family.

It catalyses the reaction L-glutamate = D-glutamate. The protein operates within cell wall biogenesis; peptidoglycan biosynthesis. In terms of biological role, provides the (R)-glutamate required for cell wall biosynthesis. This chain is Glutamate racemase, found in Chlorobaculum tepidum (strain ATCC 49652 / DSM 12025 / NBRC 103806 / TLS) (Chlorobium tepidum).